The sequence spans 280 residues: Fructose-1,6-bisphosphatase class 1 (280 aa).

4 residues coordinate Mg(2+): Glu64, Asp83, Leu85, and Asp86. Substrate-binding positions include 86–89 (DGSS), Tyr189, and Lys220. Residue Glu226 coordinates Mg(2+).

The protein belongs to the FBPase class 1 family. Homotetramer. Requires Mg(2+) as cofactor.

The protein localises to the cytoplasm. The catalysed reaction is beta-D-fructose 1,6-bisphosphate + H2O = beta-D-fructose 6-phosphate + phosphate. It functions in the pathway carbohydrate biosynthesis; gluconeogenesis. The polypeptide is Fructose-1,6-bisphosphatase class 1 (Campylobacter jejuni subsp. doylei (strain ATCC BAA-1458 / RM4099 / 269.97)).